Reading from the N-terminus, the 156-residue chain is Small ribosomal subunit protein uS7 (156 aa).

This sequence belongs to the universal ribosomal protein uS7 family. Part of the 30S ribosomal subunit. Contacts proteins S9 and S11.

In terms of biological role, one of the primary rRNA binding proteins, it binds directly to 16S rRNA where it nucleates assembly of the head domain of the 30S subunit. Is located at the subunit interface close to the decoding center, probably blocks exit of the E-site tRNA. In Chlorobaculum parvum (strain DSM 263 / NCIMB 8327) (Chlorobium vibrioforme subsp. thiosulfatophilum), this protein is Small ribosomal subunit protein uS7.